Reading from the N-terminus, the 305-residue chain is Ribosomal RNA small subunit methyltransferase H (305 aa).

S-adenosyl-L-methionine-binding positions include 30-32, aspartate 49, phenylalanine 74, aspartate 96, and glutamine 103; that span reads GGH.

Belongs to the methyltransferase superfamily. RsmH family.

It is found in the cytoplasm. The enzyme catalyses cytidine(1402) in 16S rRNA + S-adenosyl-L-methionine = N(4)-methylcytidine(1402) in 16S rRNA + S-adenosyl-L-homocysteine + H(+). In terms of biological role, specifically methylates the N4 position of cytidine in position 1402 (C1402) of 16S rRNA. The sequence is that of Ribosomal RNA small subunit methyltransferase H from Francisella tularensis subsp. holarctica (strain LVS).